Reading from the N-terminus, the 239-residue chain is Ribosomal RNA small subunit methyltransferase G (239 aa).

S-adenosyl-L-methionine contacts are provided by residues Gly105, Leu110, 156 to 157 (VE), and Arg169.

It belongs to the methyltransferase superfamily. RNA methyltransferase RsmG family.

It is found in the cytoplasm. It catalyses the reaction guanosine(527) in 16S rRNA + S-adenosyl-L-methionine = N(7)-methylguanosine(527) in 16S rRNA + S-adenosyl-L-homocysteine. Specifically methylates the N7 position of guanine in position 527 of 16S rRNA. This chain is Ribosomal RNA small subunit methyltransferase G, found in Verminephrobacter eiseniae (strain EF01-2).